Consider the following 159-residue polypeptide: Transcriptional repressor NrdR (159 aa).

A zinc finger lies at 3-34 (CPFCRHDDTQVVDSRVSEDGAAIRRRRRCSAC). Residues 49-139 (PAVVKKDGSR…VYRRFEDVSE (91 aa)) enclose the ATP-cone domain.

Belongs to the NrdR family. The cofactor is Zn(2+).

Functionally, negatively regulates transcription of bacterial ribonucleotide reductase nrd genes and operons by binding to NrdR-boxes. This Burkholderia thailandensis (strain ATCC 700388 / DSM 13276 / CCUG 48851 / CIP 106301 / E264) protein is Transcriptional repressor NrdR.